The following is a 311-amino-acid chain: Homoserine O-acetyltransferase (311 aa).

C142 acts as the Acyl-thioester intermediate in catalysis. K163 and S192 together coordinate substrate. H235 (proton acceptor) is an active-site residue. E237 is an active-site residue. Substrate is bound at residue R249.

The protein belongs to the MetA family.

It localises to the cytoplasm. It carries out the reaction L-homoserine + acetyl-CoA = O-acetyl-L-homoserine + CoA. It functions in the pathway amino-acid biosynthesis; L-methionine biosynthesis via de novo pathway; O-acetyl-L-homoserine from L-homoserine: step 1/1. Its function is as follows. Transfers an acetyl group from acetyl-CoA to L-homoserine, forming acetyl-L-homoserine. The protein is Homoserine O-acetyltransferase of Lysinibacillus sphaericus (strain C3-41).